The sequence spans 696 residues: DNA-directed RNA polymerase subunit beta' (696 aa).

Residues Cys-76, Cys-78, Cys-94, and Cys-97 each contribute to the Zn(2+) site. 3 residues coordinate Mg(2+): Asp-496, Asp-498, and Asp-500.

This sequence belongs to the RNA polymerase beta' chain family. RpoC1 subfamily. As to quaternary structure, in plastids the minimal PEP RNA polymerase catalytic core is composed of four subunits: alpha, beta, beta', and beta''. When a (nuclear-encoded) sigma factor is associated with the core the holoenzyme is formed, which can initiate transcription. Mg(2+) is required as a cofactor. Zn(2+) serves as cofactor.

The protein resides in the plastid. It localises to the chloroplast. It carries out the reaction RNA(n) + a ribonucleoside 5'-triphosphate = RNA(n+1) + diphosphate. Its function is as follows. DNA-dependent RNA polymerase catalyzes the transcription of DNA into RNA using the four ribonucleoside triphosphates as substrates. The chain is DNA-directed RNA polymerase subunit beta' from Guizotia abyssinica (Niger).